The following is a 157-amino-acid chain: MSEMSVVEYEVVSKNLTSKMSHELLFSVKKRWFVKPFRHDRQLGKLHYKLLPGNYIKFGLYVLKNQDYARFEIAWVHVDKDGKIEERTVYSIETYWHIFIDIENDLNCPYVLAKFIEMRPEFHKTAWVEESNYSIAEDDIQMVESIKRYLERKIASD.

This is an uncharacterized protein from Acidianus hospitalis (AFV-1).